Consider the following 836-residue polypeptide: Protein translocase subunit SecA (836 aa).

ATP is bound by residues Gln85, 103–107 (GEGKT), and Asp492. Residues Cys820, Cys822, Cys831, and Cys832 each coordinate Zn(2+).

This sequence belongs to the SecA family. In terms of assembly, monomer and homodimer. Part of the essential Sec protein translocation apparatus which comprises SecA, SecYEG and auxiliary proteins SecDF. Other proteins may also be involved. It depends on Zn(2+) as a cofactor.

It is found in the cell membrane. It localises to the cytoplasm. It carries out the reaction ATP + H2O + cellular proteinSide 1 = ADP + phosphate + cellular proteinSide 2.. Its function is as follows. Part of the Sec protein translocase complex. Interacts with the SecYEG preprotein conducting channel. Has a central role in coupling the hydrolysis of ATP to the transfer of proteins into and across the cell membrane, serving as an ATP-driven molecular motor driving the stepwise translocation of polypeptide chains across the membrane. This chain is Protein translocase subunit SecA, found in Clostridium botulinum (strain Eklund 17B / Type B).